The primary structure comprises 141 residues: Hemoglobin subunit alpha (141 aa).

The Globin domain occupies 1–141 (VLSPADKTNV…VSTVLTSKYR (141 aa)). At serine 3 the chain carries Phosphoserine. Lysine 7 carries the post-translational modification N6-succinyllysine. Threonine 8 is subject to Phosphothreonine. N6-succinyllysine is present on lysine 11. A Phosphoserine modification is found at serine 35. N6-succinyllysine is present on lysine 40. Serine 49 bears the Phosphoserine mark. Histidine 58 is an O2 binding site. Histidine 87 lines the heme b pocket. At serine 102 the chain carries Phosphoserine. Threonine 108 is modified (phosphothreonine). Serine 124 carries the phosphoserine modification. A phosphothreonine mark is found at threonine 134 and threonine 137. Residue serine 138 is modified to Phosphoserine.

Belongs to the globin family. Heterotetramer of two alpha chains and two beta chains. In terms of tissue distribution, red blood cells.

Functionally, involved in oxygen transport from the lung to the various peripheral tissues. Hemopressin acts as an antagonist peptide of the cannabinoid receptor CNR1. Hemopressin-binding efficiently blocks cannabinoid receptor CNR1 and subsequent signaling. This chain is Hemoglobin subunit alpha (HBA), found in Eulemur fulvus fulvus (Brown lemur).